The chain runs to 163 residues: Protein NAG1 (163 aa).

The helical transmembrane segment at 76 to 96 threads the bilayer; the sequence is ACFSVRIVLPLSLTISISALM.

It is found in the membrane. In terms of biological role, involved in yeast cell wall biogenesis. The protein is Protein NAG1 (NAG1) of Saccharomyces cerevisiae (strain ATCC 204508 / S288c) (Baker's yeast).